A 746-amino-acid polypeptide reads, in one-letter code: Polyribonucleotide nucleotidyltransferase (746 aa).

Asp520 and Asp526 together coordinate Mg(2+). The 63-residue stretch at 586–648 folds into the KH domain; the sequence is PRIITVKVPV…EAARAAVNAI (63 aa). Residues 657–729 form the S1 motif domain; that stretch reads GERYLGTVVK…PRGKLSLVPV (73 aa).

The protein belongs to the polyribonucleotide nucleotidyltransferase family. It depends on Mg(2+) as a cofactor.

It localises to the cytoplasm. The enzyme catalyses RNA(n+1) + phosphate = RNA(n) + a ribonucleoside 5'-diphosphate. Involved in mRNA degradation. Catalyzes the phosphorolysis of single-stranded polyribonucleotides processively in the 3'- to 5'-direction. In Kineococcus radiotolerans (strain ATCC BAA-149 / DSM 14245 / SRS30216), this protein is Polyribonucleotide nucleotidyltransferase.